A 506-amino-acid chain; its full sequence is ATP synthase subunit alpha (506 aa).

170–177 is an ATP binding site; sequence GDRQTGKT.

The protein belongs to the ATPase alpha/beta chains family. As to quaternary structure, F-type ATPases have 2 components, CF(1) - the catalytic core - and CF(0) - the membrane proton channel. CF(1) has five subunits: alpha(3), beta(3), gamma(1), delta(1), epsilon(1). CF(0) has four main subunits: a(1), b(1), b'(1) and c(9-12).

The protein resides in the cellular thylakoid membrane. It carries out the reaction ATP + H2O + 4 H(+)(in) = ADP + phosphate + 5 H(+)(out). In terms of biological role, produces ATP from ADP in the presence of a proton gradient across the membrane. The alpha chain is a regulatory subunit. This Synechococcus sp. (strain JA-2-3B'a(2-13)) (Cyanobacteria bacterium Yellowstone B-Prime) protein is ATP synthase subunit alpha.